The following is an 833-amino-acid chain: Leucine--tRNA ligase (833 aa).

The 'HIGH' region signature appears at 41–52 (PYPSGAGLHVGH). A 'KMSKS' region motif is present at residues 610 to 614 (KMSKS). Lys613 serves as a coordination point for ATP.

Belongs to the class-I aminoacyl-tRNA synthetase family.

The protein localises to the cytoplasm. The catalysed reaction is tRNA(Leu) + L-leucine + ATP = L-leucyl-tRNA(Leu) + AMP + diphosphate. The protein is Leucine--tRNA ligase of Streptococcus pyogenes serotype M6 (strain ATCC BAA-946 / MGAS10394).